Here is a 116-residue protein sequence, read N- to C-terminus: Large ribosomal subunit protein bL17 (116 aa).

It belongs to the bacterial ribosomal protein bL17 family. Part of the 50S ribosomal subunit. Contacts protein L32.

The protein is Large ribosomal subunit protein bL17 of Microcystis aeruginosa (strain NIES-843 / IAM M-2473).